The primary structure comprises 381 residues: Protein-glutamate methylesterase/protein-glutamine glutaminase 1 (381 aa).

Residues Arg-14–Ser-132 form the Response regulatory domain. Asp-65 carries the post-translational modification 4-aspartylphosphate. The tract at residues Gln-143 to Val-173 is disordered. The span at Ala-144 to Arg-153 shows a compositional bias: low complexity. The 194-residue stretch at Pro-188 to Arg-381 folds into the CheB-type methylesterase domain. Catalysis depends on residues Ser-199, His-227, and Asp-323.

It belongs to the CheB family. Phosphorylated by CheA. Phosphorylation of the N-terminal regulatory domain activates the methylesterase activity.

The protein resides in the cytoplasm. The catalysed reaction is [protein]-L-glutamate 5-O-methyl ester + H2O = L-glutamyl-[protein] + methanol + H(+). It carries out the reaction L-glutaminyl-[protein] + H2O = L-glutamyl-[protein] + NH4(+). Its function is as follows. Involved in chemotaxis. Part of a chemotaxis signal transduction system that modulates chemotaxis in response to various stimuli. Catalyzes the demethylation of specific methylglutamate residues introduced into the chemoreceptors (methyl-accepting chemotaxis proteins or MCP) by CheR. Also mediates the irreversible deamidation of specific glutamine residues to glutamic acid. The protein is Protein-glutamate methylesterase/protein-glutamine glutaminase 1 of Paramagnetospirillum magneticum (strain ATCC 700264 / AMB-1) (Magnetospirillum magneticum).